The chain runs to 114 residues: Class I hydrophobin 6 (114 aa).

Positions 1-19 (MLFKQLILVATALTTLAVA) are cleaved as a signal peptide. 4 disulfide bridges follow: Cys-33/Cys-93, Cys-40/Cys-87, Cys-41/Cys-74, and Cys-94/Cys-107. Residue Asn-42 is glycosylated (N-linked (GlcNAc...) asparagine).

The protein belongs to the fungal hydrophobin family. In terms of assembly, self-assembles to form functional amyloid fibrils called rodlets. Self-assembly into fibrillar rodlets occurs spontaneously at hydrophobic:hydrophilic interfaces and the rodlets further associate laterally to form amphipathic monolayers.

It is found in the secreted. The protein localises to the cell wall. In terms of biological role, aerial growth, conidiation, and dispersal of filamentous fungi in the environment rely upon a capability of their secreting small amphipathic proteins called hydrophobins (HPBs) with low sequence identity. Class I can self-assemble into an outermost layer of rodlet bundles on aerial cell surfaces, conferring cellular hydrophobicity that supports fungal growth, development and dispersal; whereas Class II form highly ordered films at water-air interfaces through intermolecular interactions but contribute nothing to the rodlet structure. The sequence is that of Class I hydrophobin 6 from Pleurotus ostreatus (strain PC15) (Oyster mushroom).